The sequence spans 63 residues: Keratin-associated protein 19-7 (63 aa).

This sequence belongs to the KRTAP type 19 family. In terms of assembly, interacts with hair keratins.

Its function is as follows. In the hair cortex, hair keratin intermediate filaments are embedded in an interfilamentous matrix, consisting of hair keratin-associated proteins (KRTAP), which are essential for the formation of a rigid and resistant hair shaft through their extensive disulfide bond cross-linking with abundant cysteine residues of hair keratins. The matrix proteins include the high-sulfur and high-glycine-tyrosine keratins. This chain is Keratin-associated protein 19-7 (KRTAP19-7), found in Homo sapiens (Human).